Consider the following 131-residue polypeptide: D-ribose pyranase (131 aa).

Catalysis depends on H20, which acts as the Proton donor. Substrate is bound by residues D28, H98, and 120 to 122 (YAN).

This sequence belongs to the RbsD / FucU family. RbsD subfamily. In terms of assembly, homodecamer.

It localises to the cytoplasm. It carries out the reaction beta-D-ribopyranose = beta-D-ribofuranose. It participates in carbohydrate metabolism; D-ribose degradation; D-ribose 5-phosphate from beta-D-ribopyranose: step 1/2. Catalyzes the interconversion of beta-pyran and beta-furan forms of D-ribose. The chain is D-ribose pyranase from Bacillus licheniformis (strain ATCC 14580 / DSM 13 / JCM 2505 / CCUG 7422 / NBRC 12200 / NCIMB 9375 / NCTC 10341 / NRRL NRS-1264 / Gibson 46).